A 270-amino-acid polypeptide reads, in one-letter code: Mevalonyl-coenzyme A hydratase sidH (270 aa).

The PTS1-type peroxisomal targeting signal motif lies at 268 to 270 (SKL).

This sequence belongs to the enoyl-CoA hydratase/isomerase family.

Its subcellular location is the peroxisome. It participates in siderophore biosynthesis. In terms of biological role, mevalonyl-coenzyme A hydratase; part of the siderophore biosynthetic pathway. Aspergillus fumigatus produces 4 types of siderophores, low-molecular-mass iron chelators, including excreted fusarinine C (FsC) and triacetylfusarinine C (TAFC) for iron uptake and intacellular ferricrocin (FC) for hyphal and hydroxyferricrocin (HFC) for conidial iron distribution and storage. TAFC consists of 3 N(2)-acetyl-N(5)-anhydromevalonyl-N(5)-hydroxyornithine residues cyclically linked by ester bonds; FC is a cyclic hexapeptide with the structure Gly-Ser-Gly-(N(5)-acetyl-N(5)-hydroxyornithine)x3. The biosynthesis of all four siderophores depends on the hydroxylation of ornithine, catalyzed by the monooxygenase sidA. Subsequently, the pathways for biosynthesis of extra- and intracellular siderophores split. For biosynthesis of extracellular siderophores, the transacylase sidF transfers anhydromevalonyl to N(5)-hydroxyornithine. The required anhydromevalonyl-CoA moiety is derived from mevalonate by CoA ligation and dehydration catalyzed by sidI and sidH respectively. The acetylation of N(5)-hydroxyornithine for FC biosynthesis involves the constitutively expressed sidL. FC is hydroxylated to HFC by an as yet uncharacterized enzyme during conidiation. Assembly of fusarinine C (FsC) and FC is catalyzed by two different nonribosomal peptide synthetases (NRPS), sidD and sidC respectively. Subsequently, sidG catalyzes N2-acetylation of FsC for forming TAFC. Both extra- and intracellular siderophores are crucial for growth during iron limitation and virulence. The sequence is that of Mevalonyl-coenzyme A hydratase sidH from Aspergillus fumigatus (strain ATCC MYA-4609 / CBS 101355 / FGSC A1100 / Af293) (Neosartorya fumigata).